Here is a 1061-residue protein sequence, read N- to C-terminus: MHIIKPVWLTHGGDRKDYEVYSCDVSPDGKRLVTAAGDGYVRIWSTDAIYNAADPEYADKPKQLASLSNHSGTIHAVRFSHNGKYLASGADDKIVCVYVHEPNPPSHTSTFGTNEPPPVENWRTIRRLIGHDNDVQDLGWSWDSSILVSVGLDSKVVVWSGHTFEKLKTIPSHQSHVKGITFDPANKYFATASDDRTIRIFRFTSPTPNSTAHDQIQNFVLEHTVKAPFVNSPLTTYFRRCSWSPDGTHIAAANAVNGPVSAAAIINRGSWDSDINLIGHEAPVEVCAFSPRLYSFSPPGKNATDNQGNAGPTLVTVIACAGGDKSLSVWITINPRPIVITQDLSAKAISDLAWSPDGKNLFATALDGTILVVRFEDQELGYPMPMEENEKSLTKFGTSRRGAGIVESANGLLLEEMSKAGEIKGVEGRMGALMGDGHPSTDQGVNGTPGDLSRSGAATAGTATPTGTQKPQQNGTPNGTPGDQEKPDPYAAKLERLKQRPTYTKDGKKRIAPLLVSGAGGTQSSLPQSRLVASSASGLAGRSEGPETVLDLSKPFDGLPKGGIAAILFGNKRKFAQMEDGEDNSVEKRVAAASQHGANPVLINEPDGLVPAAQTARELQETPEFIRPAVVNPVMAVSQIRLAVPKVRVHIVQGIDTFGNPTSVSSGLASSSQSKADLTLEARNHSGPSLTGRVTDREPSRVSLTRGDQPLWQDFLPKAVLLVTGNKKFWAAATEDGSVYIWTPAGRRLVSALVLEAQPVLLECRESWLLCITAVGMCYVWNVTTLTSPHPPISLAPVLDAAVHTMTQTPTTVPSIIAARISSQGRIILAVSNGDGYSYNPSLYTWQRLSEPWFAVASQYWNTTDSSVGDLQLARNQTGPDAAISAGIIPFLERNTTDEIVVRGRAYFLQRLIKVLLSKEGFESFEAGASIAHLENRVAAALSLGAKEEFRLYLLMYAKRLGAEGLKMKTEELLEGLIGGIFSEGEEKENSVTGDKGKNSEEGLWECESDTICGWPRRDLLKEVVLALGKHRDLQRITVPYAHLLGILDEDKNEADAMVIT.

WD repeat units follow at residues 15–54 (RKDYEVYSCDVSPDGKRLVTAAGDGYVRIWSTDAIYNAAD), 69–108 (NHSGTIHAVRFSHNGKYLASGADDKIVCVYVHEPNPPSHT), 130–169 (GHDNDVQDLGWSWDSSILVSVGLDSKVVVWSGHTFEKLKT), 172–211 (SHQSHVKGITFDPANKYFATASDDRTIRIFRFTSPTPNST), 233–276 (PLTT…SDIN), 279–340 (GHEA…PIVI), and 344–385 (LSAK…YPMP). A disordered region spans residues 430 to 488 (MGALMGDGHPSTDQGVNGTPGDLSRSGAATAGTATPTGTQKPQQNGTPNGTPGDQEKPD). Over residues 456 to 468 (GAATAGTATPTGT) the composition is skewed to low complexity. The segment covering 469-481 (QKPQQNGTPNGTP) has biased composition (polar residues).

It belongs to the WD repeat HIR1 family.

It localises to the nucleus. Its function is as follows. Required for replication-independent chromatin assembly and for the periodic repression of histone gene transcription during the cell cycle. In Coccidioides immitis (strain RS) (Valley fever fungus), this protein is Protein HIR1 (HIR1).